The sequence spans 181 residues: Peptidyl-tRNA hydrolase (181 aa).

Tyrosine 14 lines the tRNA pocket. Histidine 19 functions as the Proton acceptor in the catalytic mechanism. Residues tyrosine 62, asparagine 64, and asparagine 108 each coordinate tRNA.

It belongs to the PTH family. Monomer.

It is found in the cytoplasm. It carries out the reaction an N-acyl-L-alpha-aminoacyl-tRNA + H2O = an N-acyl-L-amino acid + a tRNA + H(+). Hydrolyzes ribosome-free peptidyl-tRNAs (with 1 or more amino acids incorporated), which drop off the ribosome during protein synthesis, or as a result of ribosome stalling. Its function is as follows. Catalyzes the release of premature peptidyl moieties from peptidyl-tRNA molecules trapped in stalled 50S ribosomal subunits, and thus maintains levels of free tRNAs and 50S ribosomes. The polypeptide is Peptidyl-tRNA hydrolase (Campylobacter jejuni (strain RM1221)).